A 255-amino-acid polypeptide reads, in one-letter code: F-box/SPRY domain-containing protein 1 (255 aa).

The F-box domain maps to 3 to 51 (DPVAALCNYNVLEVIFSYLELEDLSHCSQVCKSWYHFLNDENSDVWRWH). The 193-residue stretch at 61–253 (LKSDLLSSVS…VSMVYLGTPL (193 aa)) folds into the B30.2/SPRY domain.

This sequence belongs to the FBXO45/Fsn family. As to quaternary structure, component of an E3 ubiquitin ligase complex composed of hiw and Fsn.

The protein localises to the synapse. Its pathway is protein modification; protein ubiquitination. Functionally, required in the presynaptic motoneuron to down-regulate the levels of wnd and restrain synaptic terminal growth at the neuromuscular junction (NMJ). The polypeptide is F-box/SPRY domain-containing protein 1 (Drosophila erecta (Fruit fly)).